The primary structure comprises 944 residues: UvrABC system protein A (944 aa).

Residue glycine 33 to serine 40 coordinates ATP. Residues cysteine 252–cysteine 279 form a C4-type zinc finger. 2 ABC transporter domains span residues tryptophan 309–leucine 587 and isoleucine 607–lysine 935. Residue glycine 639–serine 646 participates in ATP binding. Residues cysteine 738–cysteine 764 form a C4-type zinc finger.

This sequence belongs to the ABC transporter superfamily. UvrA family. As to quaternary structure, forms a heterotetramer with UvrB during the search for lesions.

It localises to the cytoplasm. The UvrABC repair system catalyzes the recognition and processing of DNA lesions. UvrA is an ATPase and a DNA-binding protein. A damage recognition complex composed of 2 UvrA and 2 UvrB subunits scans DNA for abnormalities. When the presence of a lesion has been verified by UvrB, the UvrA molecules dissociate. The protein is UvrABC system protein A of Staphylococcus epidermidis (strain ATCC 35984 / DSM 28319 / BCRC 17069 / CCUG 31568 / BM 3577 / RP62A).